Here is an 878-residue protein sequence, read N- to C-terminus: Serine/threonine-protein kinase D2 (878 aa).

The span at 1–12 (MATAPSYPAGLP) shows a compositional bias: low complexity. The segment at 1–35 (MATAPSYPAGLPGSPGPGSPPPPGGLELQSPPPLL) is disordered. The span at 14 to 35 (SPGPGSPPPPGGLELQSPPPLL) shows a compositional bias: pro residues. The residue at position 30 (Ser30) is a Phosphoserine. A Phosphotyrosine modification is found at Tyr87. The segment at 138 to 188 (PHALTVHSYRAPAFCDHCGEMLFGLVRQGLKCDGCGLNYHKRCAFSIPNNC) adopts a Phorbol-ester/DAG-type 1 zinc-finger fold. Phosphoserine is present on residues Ser197, Ser198, Ser200, Ser203, Ser206, Ser212, and Ser214. The tract at residues 224 to 247 (RSTTELLPRRPPSSSSSSSASSYT) is disordered. The span at 236–245 (SSSSSSSASS) shows a compositional bias: low complexity. A Phosphoserine; by CSNK1D and CSNK1E modification is found at Ser244. The segment at 264-314 (PHTFLIHSYTRPTVCQACKKLLKGLFRQGLQCKDCKFNCHKRCATRVPNDC) adopts a Phorbol-ester/DAG-type 2 zinc-finger fold. A disordered region spans residues 343–373 (ESEDSGVIPGSHSENALHASEEEEGEGGKAQ). The region spanning 397–509 (TTLREGWVVH…WETAIRQALM (113 aa)) is the PH domain. Tyr407 is subject to Phosphotyrosine. Tyr438 carries the post-translational modification Phosphotyrosine; by ABL1. Ser518 is subject to Phosphoserine. In terms of domain architecture, Protein kinase spans 551 to 807 (IFPDEVLGSG…VDKSLSHPWL (257 aa)). ATP contacts are provided by residues 557 to 565 (LGSGQFGVV) and Lys580. Catalysis depends on Asp674, which acts as the Proton acceptor. Ser706 bears the Phosphoserine; by PKC mark. At Ser710 the chain carries Phosphoserine. At Tyr717 the chain carries Phosphotyrosine; by ABL1. The Important for ABL1-mediated Tyr-717 phosphorylation signature appears at 724–726 (LNQ). The interval 844–869 (HPLPGSGLPTDRDLGGACPPQDHDMQ) is disordered. Residue Ser876 is modified to Phosphoserine; by autocatalysis.

This sequence belongs to the protein kinase superfamily. CAMK Ser/Thr protein kinase family. PKD subfamily. Interacts (via C-terminus) with LCK. Interacts (via N-terminal AP-rich region) with CIB1 isoform 2. Interacts (via N-terminus and zing-finger domain 1 and 2) with PRKCD in response to oxidative stress; the interaction is independent of PRKD2 tyrosine phosphorylation. The cofactor is Mg(2+). In terms of processing, phosphorylation of Ser-876 correlates with the activation status of the kinase. Ser-706 or/and Ser-710 are probably phosphorylated by PKC. Phosphorylation at Ser-244 by CSNK1D and CSNK1E promotes nuclear localization and substrate targeting. Phosphorylation at Ser-244, Ser-706 and Ser-710 is required for nuclear localization. Phosphorylated at Tyr-438 by ABL1 in response to oxidative stress. Phosphorylated at Tyr-717 by ABL1 specifically in response to oxidative stress; requires prior phosphorylation at Ser-706 or/and Ser-710. As to expression, widely expressed.

Its subcellular location is the cytoplasm. The protein resides in the cell membrane. It is found in the nucleus. The protein localises to the golgi apparatus. It localises to the trans-Golgi network. It carries out the reaction L-seryl-[protein] + ATP = O-phospho-L-seryl-[protein] + ADP + H(+). It catalyses the reaction L-threonyl-[protein] + ATP = O-phospho-L-threonyl-[protein] + ADP + H(+). With respect to regulation, activated by DAG and phorbol esters. Phorbol-ester/DAG-type domains bind DAG, mediating translocation to membranes. Autophosphorylation of Ser-710 and phosphorylation of Ser-706 by PKC relieves auto-inhibition by the PH domain. Catalytic activity is further increased by phosphorylation at Tyr-717 in response to oxidative stress. Its function is as follows. Serine/threonine-protein kinase that converts transient diacylglycerol (DAG) signals into prolonged physiological effects downstream of PKC, and is involved in the regulation of cell proliferation via MAPK1/3 (ERK1/2) signaling, oxidative stress-induced NF-kappa-B activation, inhibition of HDAC7 transcriptional repression, signaling downstream of T-cell antigen receptor (TCR) and cytokine production, and plays a role in Golgi membrane trafficking, angiogenesis, secretory granule release and cell adhesion. May potentiate mitogenesis induced by the neuropeptide bombesin by mediating an increase in the duration of MAPK1/3 (ERK1/2) signaling, which leads to accumulation of immediate-early gene products including FOS that stimulate cell cycle progression. In response to oxidative stress, is phosphorylated at Tyr-438 and Tyr-717 by ABL1, which leads to the activation of PRKD2 without increasing its catalytic activity, and mediates activation of NF-kappa-B. In response to the activation of the gastrin receptor CCKBR, is phosphorylated at Ser-244 by CSNK1D and CSNK1E, translocates to the nucleus, phosphorylates HDAC7, leading to nuclear export of HDAC7 and inhibition of HDAC7 transcriptional repression of NR4A1/NUR77. Upon TCR stimulation, is activated independently of ZAP70, translocates from the cytoplasm to the nucleus and is required for interleukin-2 (IL2) promoter up-regulation. During adaptive immune responses, is required in peripheral T-lymphocytes for the production of the effector cytokines IL2 and IFNG after TCR engagement and for optimal induction of antibody responses to antigens. In epithelial cells stimulated with lysophosphatidic acid (LPA), is activated through a PKC-dependent pathway and mediates LPA-stimulated interleukin-8 (IL8) secretion via a NF-kappa-B-dependent pathway. During TCR-induced T-cell activation, interacts with and is activated by the tyrosine kinase LCK, which results in the activation of the NFAT transcription factors. In the trans-Golgi network (TGN), regulates the fission of transport vesicles that are on their way to the plasma membrane and in polarized cells is involved in the transport of proteins from the TGN to the basolateral membrane. Plays an important role in endothelial cell proliferation and migration prior to angiogenesis, partly through modulation of the expression of KDR/VEGFR2 and FGFR1, two key growth factor receptors involved in angiogenesis. In secretory pathway, is required for the release of chromogranin-A (CHGA)-containing secretory granules from the TGN. Downstream of PRKCA, plays important roles in angiotensin-2-induced monocyte adhesion to endothelial cells. Plays a regulatory role in angiogenesis and tumor growth by phosphorylating a downstream mediator CIB1 isoform 2, resulting in vascular endothelial growth factor A (VEGFA) secretion. The polypeptide is Serine/threonine-protein kinase D2 (PRKD2) (Homo sapiens (Human)).